The sequence spans 415 residues: Cell wall mannoprotein PIR3 (415 aa).

A signal peptide spans 1-18; the sequence is MQYKKPLVVSALAATSLA. The propeptide occupies 19 to 67; that stretch reads AYAPKDPWSTLTPSATYKGGITDYSSSFGIAIEAVATSASSVASSKAKR. PIR1/2/3 repeat units lie at residues 66–84, 92–109, 110–127, 128–145, 146–163, 164–181, 182–199, 200–217, 218–235, 236–253, 254–271, 272–288, and 289–307; these read KRAA…TTTA, AAAV…AKST, AAAA…AKST, AAAA…TTST, KAAA…ASKT, and TSGA…AEVK.

Belongs to the PIR protein family. Covalently linked to beta-1,3-glucan of the inner cell wall layer via an alkali-sensitive ester linkage between the gamma-carboxyl group of glutamic acids, arising from specific glutamines within the PIR1/2/3 repeats, and hydroxyl groups of glucoses of beta-1,3-glucan chains. Post-translationally, O-glycosylated. Extensively O-mannosylated.

It is found in the secreted. It localises to the cell wall. Component of the outer cell wall layer. Required for stability of the cell wall and for optimal growth. Required for resistance against several antifungal and cell wall-perturbing agents. The polypeptide is Cell wall mannoprotein PIR3 (PIR3) (Saccharomyces cerevisiae (strain YJM789) (Baker's yeast)).